Here is a 427-residue protein sequence, read N- to C-terminus: Diaminobutyrate--2-oxoglutarate transaminase (427 aa).

Lysine 264 carries the post-translational modification N6-(pyridoxal phosphate)lysine.

It belongs to the class-III pyridoxal-phosphate-dependent aminotransferase family. The cofactor is pyridoxal 5'-phosphate.

It catalyses the reaction L-2,4-diaminobutanoate + 2-oxoglutarate = L-aspartate 4-semialdehyde + L-glutamate. It functions in the pathway amine and polyamine biosynthesis; ectoine biosynthesis; L-ectoine from L-aspartate 4-semialdehyde: step 1/3. In terms of biological role, catalyzes reversively the conversion of L-aspartate beta-semialdehyde (ASA) to L-2,4-diaminobutyrate (DABA) by transamination with L-glutamate. The protein is Diaminobutyrate--2-oxoglutarate transaminase (ectB) of Wolinella succinogenes (strain ATCC 29543 / DSM 1740 / CCUG 13145 / JCM 31913 / LMG 7466 / NCTC 11488 / FDC 602W) (Vibrio succinogenes).